The primary structure comprises 885 residues: MPGKEAAGDVMKSSTKSNTKKMVQARLPFKRLNPVPKDEGCLEEKKIRIPQNVSPQKMLYSLNSSMEDMENDCEMETEMTPIPKAINGKGPLDNYIRKAPKASNAPSIITIDLTEDSNISTSNDSPLNGESRAQLANGTVSPERSTTNAPLSTNEECTVSVDNKSLENMSFPELELDKPHQSAASCTSVSNFSPERAVKEDYNSSADDDSVSVSSSSSPVSLSSPDVQTGSKFTNGSSPSTSTTPTGKATSNKTSAEKKKTKDKAEKRQAEKEERECARREARAAKDLAKKKREGEREQREKDKKEKKEREDREKAEKNRLKEEKKKEKLEALEAKQEEKRKKEEEKRQKEEEKRLKEEEKRIKAEKAEITRFLQKPKTPQAPKTFARSCGKFAPFEIKKGMALAPLCRIDFEQEASEELDIFLQEQTSESSFLDEIKKRRPRKMGQTTVPTINSVEVDDVQVLGETDPVLGSNMVLEEHIKDIGVPERKKFGRMKLLQFCENHRPAYWGTSNKRSRVINPRKPWAQDTDMLDYEVDSDEEWEEEEPGESLSHSEGENEDDDPKEEEDEDDDGFFVPHGYLSNDEGVSDEECTDPENQKVRQKLKAKEWDDLQSNSKKIRVLQPVVIGCVWCDSKASEIRLLQKFSACILESPAVEEELTQDISSAQKIKDRQILSKLVPLLHGNVNGSKIIIQEFQECCRRGLFLEDNASHATDIESTSPNSTPQTPSNIIVPSKARLKRLISENSVYEKRPEHRMCWYVHSDVLKGLQQDNLPVPCQWTYITQVNSVSKENNGANGGSLQSLPLSGKRKSAGSMPITKFMKRARDLETAVNTDMDGFQADTEEEEDDDDCMIIEDQQAKDAEDSTIECKINLNDSAILASCQN.

4 disordered regions span residues 1-24, 115-157, 176-361, and 536-605; these read MPGKEAAGDVMKSSTKSNTKKMVQ, EDSN…NEEC, LDKP…EEEK, and VDSD…QKLK. Residues 12 to 21 are compositionally biased toward low complexity; it reads KSSTKSNTKK. Composition is skewed to polar residues over residues 116–128, 134–157, and 182–193; these read DSNISTSNDSPLN, QLANGTVSPERSTTNAPLSTNEEC, and SAASCTSVSNFS. Composition is skewed to low complexity over residues 211–227 and 237–254; these read VSVSSSSSPVSLSSPDV and SSPSTSTTPTGKATSNKT. A coiled-coil region spans residues 251–376; that stretch reads SNKTSAEKKK…KAEITRFLQK (126 aa). Residues 255 to 361 are compositionally biased toward basic and acidic residues; sequence SAEKKKTKDK…EEKRLKEEEK (107 aa). 2 stretches are compositionally biased toward acidic residues: residues 536-548 and 557-573; these read VDSDEEWEEEEPG and ENEDDDPKEEEDEDDDG. Residues 629 to 665 form a necessary for homodimerization, competence for chromatin assembly region; the sequence is CVWCDSKASEIRLLQKFSACILESPAVEEELTQDISS.

It belongs to the CHAF1A family. As to quaternary structure, homodimer.

It is found in the nucleus. Functionally, involved in chromatin assembly in DNA replication and DNA repair. This is Chromatin assembly factor 1 subunit A-B (chaf1a-b) from Xenopus laevis (African clawed frog).